A 131-amino-acid polypeptide reads, in one-letter code: D-ribose pyranase (131 aa).

Residue His-20 is the Proton donor of the active site. Substrate contacts are provided by residues Asp-28, His-98, and 120–122 (YAN).

The protein belongs to the RbsD / FucU family. RbsD subfamily. As to quaternary structure, homodecamer.

Its subcellular location is the cytoplasm. The catalysed reaction is beta-D-ribopyranose = beta-D-ribofuranose. It participates in carbohydrate metabolism; D-ribose degradation; D-ribose 5-phosphate from beta-D-ribopyranose: step 1/2. Its function is as follows. Catalyzes the interconversion of beta-pyran and beta-furan forms of D-ribose. In Clostridium novyi (strain NT), this protein is D-ribose pyranase.